The sequence spans 180 residues: Large ribosomal subunit protein uL5 (180 aa).

Belongs to the universal ribosomal protein uL5 family. Part of the 50S ribosomal subunit; part of the 5S rRNA/L5/L18/L25 subcomplex. Contacts the 5S rRNA and the P site tRNA. Forms a bridge to the 30S subunit in the 70S ribosome.

In terms of biological role, this is one of the proteins that bind and probably mediate the attachment of the 5S RNA into the large ribosomal subunit, where it forms part of the central protuberance. In the 70S ribosome it contacts protein S13 of the 30S subunit (bridge B1b), connecting the 2 subunits; this bridge is implicated in subunit movement. Contacts the P site tRNA; the 5S rRNA and some of its associated proteins might help stabilize positioning of ribosome-bound tRNAs. The polypeptide is Large ribosomal subunit protein uL5 (Ruminiclostridium cellulolyticum (strain ATCC 35319 / DSM 5812 / JCM 6584 / H10) (Clostridium cellulolyticum)).